The sequence spans 119 residues: Ribonuclease P protein component (119 aa).

The protein belongs to the RnpA family. Consists of a catalytic RNA component (M1 or rnpB) and a protein subunit.

The catalysed reaction is Endonucleolytic cleavage of RNA, removing 5'-extranucleotides from tRNA precursor.. In terms of biological role, RNaseP catalyzes the removal of the 5'-leader sequence from pre-tRNA to produce the mature 5'-terminus. It can also cleave other RNA substrates such as 4.5S RNA. The protein component plays an auxiliary but essential role in vivo by binding to the 5'-leader sequence and broadening the substrate specificity of the ribozyme. This chain is Ribonuclease P protein component, found in Mycolicibacterium paratuberculosis (strain ATCC BAA-968 / K-10) (Mycobacterium paratuberculosis).